The sequence spans 337 residues: Ferredoxin--NADP reductase (337 aa).

Residues glutamate 42, glutamine 50, tyrosine 55, valine 97, phenylalanine 130, aspartate 292, and threonine 333 each coordinate FAD.

Belongs to the ferredoxin--NADP reductase type 2 family. As to quaternary structure, homodimer. FAD serves as cofactor.

It carries out the reaction 2 reduced [2Fe-2S]-[ferredoxin] + NADP(+) + H(+) = 2 oxidized [2Fe-2S]-[ferredoxin] + NADPH. This chain is Ferredoxin--NADP reductase, found in Streptococcus mutans serotype c (strain ATCC 700610 / UA159).